Consider the following 122-residue polypeptide: Urease subunit beta (122 aa).

This sequence belongs to the urease beta subunit family. Heterotrimer of UreA (gamma), UreB (beta) and UreC (alpha) subunits. Three heterotrimers associate to form the active enzyme.

It localises to the cytoplasm. The catalysed reaction is urea + 2 H2O + H(+) = hydrogencarbonate + 2 NH4(+). Its pathway is nitrogen metabolism; urea degradation; CO(2) and NH(3) from urea (urease route): step 1/1. The protein is Urease subunit beta of Flavobacterium johnsoniae (strain ATCC 17061 / DSM 2064 / JCM 8514 / BCRC 14874 / CCUG 350202 / NBRC 14942 / NCIMB 11054 / UW101) (Cytophaga johnsonae).